The primary structure comprises 264 residues: Probable glycerol uptake facilitator protein (264 aa).

The next 2 helical transmembrane spans lie at 13-33 (WIGAEFLGTFFLILSGNGAGS) and 51-71 (TAAFAWGIAVLVGVLIANSLF). The short motif at 78–80 (NPA) is the NPA 1 element. 3 consecutive transmembrane segments (helical) span residues 104–124 (IPLLWVALLLAWVAQFAGAML), 162–182 (FATEFVATSVLIASLLVAGSF), and 195–215 (VPMLVVTGLIMSFGAATGTAI). The short motif at 216–218 (NPA) is the NPA 2 element. The chain crosses the membrane as a helical span at residues 244–264 (IPVAAPLSASVILGVLVAVIV).

It belongs to the MIP/aquaporin (TC 1.A.8) family.

The protein resides in the cell membrane. The catalysed reaction is glycerol(in) = glycerol(out). In terms of biological role, mediates glycerol diffusion across the cytoplasmic membrane via a pore-type mechanism. This chain is Probable glycerol uptake facilitator protein (glpF), found in Mycoplasma pneumoniae (strain ATCC 29342 / M129 / Subtype 1) (Mycoplasmoides pneumoniae).